The chain runs to 54 residues: MARNEIRPLVKLRSTAGTGYTYITRKNRRNDPDRLVLRKYDPVIRRHVEFREER.

The protein belongs to the bacterial ribosomal protein bL33 family.

The polypeptide is Large ribosomal subunit protein bL33A (Mycolicibacterium paratuberculosis (strain ATCC BAA-968 / K-10) (Mycobacterium paratuberculosis)).